The sequence spans 689 residues: Elongation factor G 1 (689 aa).

The tr-type G domain occupies 7-282 (DQVRTIGIIS…AVVDFLPSPL (276 aa)). GTP-binding positions include 16-23 (SHIDAGKT), 80-84 (DTPGH), and 134-137 (NKMD).

The protein belongs to the TRAFAC class translation factor GTPase superfamily. Classic translation factor GTPase family. EF-G/EF-2 subfamily.

The protein resides in the cytoplasm. Catalyzes the GTP-dependent ribosomal translocation step during translation elongation. During this step, the ribosome changes from the pre-translocational (PRE) to the post-translocational (POST) state as the newly formed A-site-bound peptidyl-tRNA and P-site-bound deacylated tRNA move to the P and E sites, respectively. Catalyzes the coordinated movement of the two tRNA molecules, the mRNA and conformational changes in the ribosome. This is Elongation factor G 1 from Geobacter sulfurreducens (strain ATCC 51573 / DSM 12127 / PCA).